We begin with the raw amino-acid sequence, 319 residues long: ATP-dependent 6-phosphofructokinase (319 aa).

ATP is bound at residue Gly11. 21-25 (RAVVR) is a binding site for ADP. Residues 72 to 73 (RC) and 102 to 105 (GDGS) contribute to the ATP site. Asp103 provides a ligand contact to Mg(2+). Substrate is bound at residue 125–127 (TID). Asp127 serves as the catalytic Proton acceptor. Residue Arg154 participates in ADP binding. Residues Arg162 and 169–171 (MGR) contribute to the substrate site. ADP contacts are provided by residues 185 to 187 (GAE), Arg211, and 213 to 215 (KKH). Residues Glu222, Arg243, and 249-252 (HVQR) each bind substrate.

It belongs to the phosphofructokinase type A (PFKA) family. ATP-dependent PFK group I subfamily. Prokaryotic clade 'B1' sub-subfamily. Homotetramer. Mg(2+) is required as a cofactor.

It localises to the cytoplasm. The enzyme catalyses beta-D-fructose 6-phosphate + ATP = beta-D-fructose 1,6-bisphosphate + ADP + H(+). It participates in carbohydrate degradation; glycolysis; D-glyceraldehyde 3-phosphate and glycerone phosphate from D-glucose: step 3/4. With respect to regulation, allosterically activated by ADP and other diphosphonucleosides, and allosterically inhibited by phosphoenolpyruvate. In terms of biological role, catalyzes the phosphorylation of D-fructose 6-phosphate to fructose 1,6-bisphosphate by ATP, the first committing step of glycolysis. This is ATP-dependent 6-phosphofructokinase from Bacillus cereus (strain B4264).